We begin with the raw amino-acid sequence, 360 residues long: Insulin gene enhancer protein ISL-2 (360 aa).

LIM zinc-binding domains are found at residues 25–86 (AMCV…RLFG) and 87–149 (IKCA…LLER). A disordered region spans residues 151–177 (AAGSPRSPGPLPGTPPGLHLPDAGSGQ). A phosphoserine mark is found at Ser154 and Ser157. The segment at residues 192 to 251 (TTRVRTVLNEKQLHTLRTCYAANPRPDALMKEQLVEMTGLSPRVIRVWFQNKRCKDKKKS) is a DNA-binding region (homeobox). Positions 273-302 (GTLLVAGSPSAHENAVQGSAVEVQTYQPPW) are LIM-binding domain (LID). At Ser280 the chain carries Phosphoserine. Residues 328-337 (SGSLGNSSGS) are compositionally biased toward low complexity. A disordered region spans residues 328–360 (SGSLGNSSGSDVTSLSSQLPDTPNSMVPSPVET). Polar residues predominate over residues 338–360 (DVTSLSSQLPDTPNSMVPSPVET).

In terms of assembly, interacts with LHX4.

Its subcellular location is the nucleus. Its function is as follows. Transcriptional factor that defines subclasses of motoneurons that segregate into columns in the spinal cord and select distinct axon pathways. This Rattus norvegicus (Rat) protein is Insulin gene enhancer protein ISL-2 (Isl2).